Consider the following 109-residue polypeptide: Iron-sulfur assembly protein IscA-like 3, mitochondrial (109 aa).

Residues 1-18 (MRKQVLALSDTAAARIRQ) constitute a mitochondrion transit peptide. 3 residues coordinate Fe cation: Cys-37, Cys-100, and Cys-102.

The protein belongs to the HesB/IscA family. Homodimer; may form tetramers and higher multimers. Requires Fe cation as cofactor.

It is found in the mitochondrion. Its function is as follows. Involved in the assembly of mitochondrial iron-sulfur proteins. Probably involved in the binding of an intermediate of Fe/S cluster assembly. The polypeptide is Iron-sulfur assembly protein IscA-like 3, mitochondrial (Arabidopsis thaliana (Mouse-ear cress)).